Here is a 402-residue protein sequence, read N- to C-terminus: Multidrug resistance protein MdtH (402 aa).

The Cytoplasmic segment spans residues 1-12; that stretch reads MSRVSQARNLGK. A helical membrane pass occupies residues 13-33; that stretch reads YFLLIDNMLVVLGFFVVFPLI. Over 34-98 the chain is Periplasmic; the sequence is SIRFVDQMGW…GFATMGIAHE (65 aa). A helical transmembrane segment spans residues 99 to 116; the sequence is PWLLWFSCFLSGLGGTLF. The Cytoplasmic portion of the chain corresponds to 117–138; it reads DPPRSALVVKLIRPEQRGRFFS. A helical transmembrane segment spans residues 139–159; the sequence is LLMMQDSAGAVIGALLGSWLL. Over 160–164 the chain is Periplasmic; the sequence is QYDFR. Residues 165 to 185 traverse the membrane as a helical segment; it reads LVCATGAILFILCALFNAWLL. The Cytoplasmic segment spans residues 186 to 213; it reads PAWKLSTVRTPVREGMRRVMSDKRFVTY. A helical transmembrane segment spans residues 214-234; the sequence is VLTLAGYYMLAVQVMLMLPIM. The Periplasmic portion of the chain corresponds to 235–243; that stretch reads VNDIAGSPA. The helical transmembrane segment at 244 to 264 threads the bilayer; that stretch reads AVKWMYAIEACLSLTLLYPIA. Residues 265-276 lie on the Cytoplasmic side of the membrane; that stretch reads RWSEKRFRLEHR. The chain crosses the membrane as a helical span at residues 277–297; it reads LMAGLLVMSLSMLPIGMVGNL. The Periplasmic portion of the chain corresponds to 298-299; the sequence is QQ. Residues 300 to 320 form a helical membrane-spanning segment; sequence LFTLICAFYIGSVIAEPARET. At 321-339 the chain is on the cytoplasmic side; that stretch reads LSASLADARARGSYMGFSR. Residues 340–360 traverse the membrane as a helical segment; the sequence is LGLAIGGAIGYIGGGWLFDMG. The Periplasmic portion of the chain corresponds to 361 to 367; the sequence is KALAQPE. Residues 368–388 traverse the membrane as a helical segment; that stretch reads LPWMMLGIIGFITFLALGWQF. The Cytoplasmic portion of the chain corresponds to 389–402; it reads SHKRTPRRMLEPGA.

This sequence belongs to the major facilitator superfamily. DHA1 family. MdtH (TC 2.A.1.2.21) subfamily.

Its subcellular location is the cell inner membrane. This Salmonella agona (strain SL483) protein is Multidrug resistance protein MdtH.